A 460-amino-acid polypeptide reads, in one-letter code: A-type ATP synthase subunit B (460 aa).

Belongs to the ATPase alpha/beta chains family. Has multiple subunits with at least A(3), B(3), C, D, E, F, H, I and proteolipid K(x).

It localises to the cell membrane. In terms of biological role, component of the A-type ATP synthase that produces ATP from ADP in the presence of a proton gradient across the membrane. The B chain is a regulatory subunit. The polypeptide is A-type ATP synthase subunit B (Methanosarcina barkeri (strain Fusaro / DSM 804)).